The following is a 336-amino-acid chain: Probable assembly chaperone of rpl4 (336 aa).

TPR repeat units follow at residues 39-72, 75-108, 110-143, and 162-195; these read GRAFELLGEVYAELADVKKARSAFKEAVSRSKNL, DQGYEKYLWLAQINDNGSKALKLYQKGVTILERL, IDKGEDADLKKKIQGAYCSIAELFMTDLCMQPDA, and AEALQTLASMRISQQKIEEAKDALSKCLQSISRA. The segment at 316-336 is disordered; it reads DEENEEAEWETSENEEEMDED.

The protein belongs to the ACL4 family.

The protein resides in the cytoplasm. The protein localises to the nucleus. Its subcellular location is the nucleolus. Functionally, acts as a chaperone for the L4 ribosomal subunit encoded by rpl4A and rpl4B, required for hierarchical ribosome assembly. Shields ribosomal protein L4 until timely release and insertion into the pre-ribosome is possible, once ribosomal protein L18 is present. The polypeptide is Probable assembly chaperone of rpl4 (Schizosaccharomyces pombe (strain 972 / ATCC 24843) (Fission yeast)).